Reading from the N-terminus, the 82-residue chain is Cortexin-1 (82 aa).

Residues 1–20 are disordered; the sequence is MSSAWTLSPEPLPPSTGPPV. The chain crosses the membrane as a helical span at residues 30 to 50; sequence TVFAFVLCLLVVLVLLMVRCV.

Belongs to the cortexin family.

The protein localises to the membrane. Functionally, may mediate extracellular or intracellular signaling of cortical neurons during forebrain development. The sequence is that of Cortexin-1 (Ctxn1) from Mus musculus (Mouse).